A 763-amino-acid chain; its full sequence is 5-methyltetrahydropteroyltriglutamate--homocysteine methyltransferase (763 aa).

5-methyltetrahydropteroyltri-L-glutamate-binding positions include 16-19 and Lys121; that span reads RELK. L-homocysteine-binding positions include 440-442 and Glu493; that span reads IGS. Residues 440 to 442 and Glu493 each bind L-methionine; that span reads IGS. Residues 524–525 and Trp570 each bind 5-methyltetrahydropteroyltri-L-glutamate; that span reads RC. An L-homocysteine-binding site is contributed by Asp608. Residue Asp608 participates in L-methionine binding. Residue Glu614 coordinates 5-methyltetrahydropteroyltri-L-glutamate. Zn(2+) is bound by residues His650, Cys652, and Glu674. His703 functions as the Proton donor in the catalytic mechanism. Cys735 is a Zn(2+) binding site.

It belongs to the vitamin-B12 independent methionine synthase family. Zn(2+) is required as a cofactor.

The enzyme catalyses 5-methyltetrahydropteroyltri-L-glutamate + L-homocysteine = tetrahydropteroyltri-L-glutamate + L-methionine. It functions in the pathway amino-acid biosynthesis; L-methionine biosynthesis via de novo pathway; L-methionine from L-homocysteine (MetE route): step 1/1. In terms of biological role, catalyzes the transfer of a methyl group from 5-methyltetrahydrofolate to homocysteine resulting in methionine formation. This is 5-methyltetrahydropteroyltriglutamate--homocysteine methyltransferase from Paraburkholderia phymatum (strain DSM 17167 / CIP 108236 / LMG 21445 / STM815) (Burkholderia phymatum).